Here is a 905-residue protein sequence, read N- to C-terminus: MADKTVKELADMVSKTVSAVQKQLTDAGLPARGEDDLVTELEQEQLVAFLKQSHGQKEKRRISLKSKTTSTARVTGSSGKSKSVNVEVRKKKVFEKPDPNKLAEEIAAREQAALEAKKRAEEEAKKREQVKKEAEERQAATLAAMRANLGGGSSSSDKKEELSTVVVKKGSKAAAAAKEAPKKKVAQTKPKVETAAERKARETREAEEERLRQIEAETRRKQAEEAQKKTLEQMRKMAGKYSDKDPVAEVRKDEPLAEGLVGEALEESFEKERREIKRGSASTATRGRRRKGQEEREIRNRKHGLKSSQASQHKFEKPVEKIVHDVEIGEQIVVSDLAQRMAVKAREVTKLLMKMGEIVSADQEIDQATASLIVEEMGHNPIPVSDTKVEDDLQEAVEERRSNVQTRPPVVTIMGHVDHGKTSLLDKIRETKVATGEAGGITQHIGAYHVETDRGVITFLDTPGHAAFTAMRSRGAQATDIVILVVAADDGMMPQTEEAIDHARASGTPLIVAINKMDKSTADPDRVLNELTTKEVVTEAWGGDVPMAKISAKTGEGIDELLELINLQAELMELEAPTDGAAQGVVIESRLEKGRGAVASILVKKGTLNQGDLVLAGEFYGKVRAMTDETGKRVKSAGPSIPVEILGLPDTPAAGSEFLVVSDEKKAREVAEFRATRERERQLERQNKMRLESMFEQMGQDDLSFLNIILKTDVRGTLEALLAALEDLSTDEVKVKVISSGVGPIAESDVTLAESSEAVLLGFNVRADNAAKRKADEAGIDIRYYSVIYGLIDDVKAAMSGMLSPEHREKILGIAEVRDVFRSSKFGAAAGCMVVEGTIYRNKSIRVLRDDKVAFTGQLQSLRRYKDDVNEVRSGMECGLAVRGYDVEVGDKIEVFEIQEIQRTI.

3 disordered regions span residues 52–84 (QSHGQKEKRRISLKSKTTSTARVTGSSGKSKSV), 116–230 (AKKR…QKKT), and 269–318 (FEKE…FEKP). Over residues 65-84 (KSKTTSTARVTGSSGKSKSV) the composition is skewed to polar residues. Basic and acidic residues predominate over residues 116–138 (AKKRAEEEAKKREQVKKEAEERQ). A compositionally biased stretch (low complexity) spans 165-178 (VVVKKGSKAAAAAK). 2 stretches are compositionally biased toward basic and acidic residues: residues 190 to 230 (PKVE…QKKT) and 269 to 278 (FEKERREIKR). Residues 406–575 (TRPPVVTIMG…NLQAELMELE (170 aa)) enclose the tr-type G domain. Residues 415–422 (GHVDHGKT) form a G1 region. GTP is bound at residue 415-422 (GHVDHGKT). The segment at 440 to 444 (GITQH) is G2. Residues 461 to 464 (DTPG) form a G3 region. Residues 461–465 (DTPGH) and 515–518 (NKMD) contribute to the GTP site. A G4 region spans residues 515 to 518 (NKMD). The tract at residues 551-553 (SAK) is G5.

This sequence belongs to the TRAFAC class translation factor GTPase superfamily. Classic translation factor GTPase family. IF-2 subfamily.

The protein resides in the cytoplasm. Its function is as follows. One of the essential components for the initiation of protein synthesis. Protects formylmethionyl-tRNA from spontaneous hydrolysis and promotes its binding to the 30S ribosomal subunits. Also involved in the hydrolysis of GTP during the formation of the 70S ribosomal complex. The chain is Translation initiation factor IF-2 from Psychrobacter sp. (strain PRwf-1).